The chain runs to 707 residues: Vicilin-like seed storage protein At2g18540 (707 aa).

An N-terminal signal peptide occupies residues 1–24 (MSRFRILPLSIFLCFVSLFFCTES). A Cupin type-1 1 domain is found at 42-185 (PLLVKKDQRT…AFAVPEDILR (144 aa)). N60, N203, N285, N356, N396, and N399 each carry an N-linked (GlcNAc...) asparagine glycan. Residues 247 to 403 (FNVFEEDPDF…SFNLSNETIK (157 aa)) enclose the Cupin type-1 2 domain. Residues 439 to 696 (EEEEIERRRK…KKEEEEEKRR (258 aa)) are compositionally biased toward basic and acidic residues. A disordered region spans residues 439-707 (EEEEIERRRK…PPQPKPPEEI (269 aa)). Over residues 698–707 (PPQPKPPEEI) the composition is skewed to pro residues.

This sequence belongs to the 7S seed storage protein family.

Functionally, seed storage protein. This chain is Vicilin-like seed storage protein At2g18540, found in Arabidopsis thaliana (Mouse-ear cress).